The following is a 231-amino-acid chain: Fibronectin type III domain-containing protein 4 (231 aa).

A signal peptide spans 1–40 (MPLAPPANSVETMASLMPLSPYLSPTVLLLVSCDLGFVRA). The Extracellular portion of the chain corresponds to 41–163 (DRPPSPVNVT…GLDGERPLQT (123 aa)). Residues 43 to 136 (PPSPVNVTVT…PRVHFRTLKG (94 aa)) enclose the Fibronectin type-III domain. N48 and N143 each carry an N-linked (GlcNAc...) asparagine glycan. The interval 118–156 (GLRGESPPGPRVHFRTLKGSDRLPSNSSSPGDITVEGLD) is disordered. The chain crosses the membrane as a helical span at residues 164-184 (GEVVIIVVVLLMWAAVIGLFC). The Cytoplasmic segment spans residues 185 to 231 (RQYDIIKDNDSNNNPKEKGKGPEQSPQGRPVGTTRQKKSPSINTIDV). Basic and acidic residues predominate over residues 193 to 205 (NDSNNNPKEKGKG). Residues 193–231 (NDSNNNPKEKGKGPEQSPQGRPVGTTRQKKSPSINTIDV) are disordered.

As to expression, predominantly expressed in the liver and in the brain, including in the cortex, hypothalamus and hippocampus. Also expressed in heart, lung, kidney and testis. In the colon, expressed in the epithelium and in a subset of immune cells in lymphoid aggregates.

Its subcellular location is the membrane. The protein localises to the secreted. In terms of biological role, has anti-inflammatory properties. In the colon, acts on macrophages to down-regulate inflammation. May suppress osteoclastogenesis and mature osteoclast resorptive function. In white adipose tissue, decreases local inflammation, via interaction with GPR116. Also required for proper systemic glucose tolerance, specifically sensitizing white adipocytes to insulin and promoting glucose uptake. The insulin sensitizing function in adipose tissue is mediated by interaction with ADGRF5/GPR116 and activation of cAMP signaling. This chain is Fibronectin type III domain-containing protein 4 (Fndc4), found in Mus musculus (Mouse).